We begin with the raw amino-acid sequence, 555 residues long: Glypican-6 (555 aa).

Positions 1–23 (MPSWIRAVILPLSGLLLTLPAAA) are cleaved as a signal peptide. The span at 348–357 (PALRSARSAP) shows a compositional bias: low complexity. Disordered stretches follow at residues 348–376 (PALRSARSAPENFNTRFRPYNPEERPTTA) and 480–501 (GNDVNFQDTSDESSGSGSGSGC). Residue serine 530 is the site of GPI-anchor amidated serine attachment. The propeptide at 531–555 (ASKFSSSLISWSLVCMVLALQRLYR) is removed in mature form.

This sequence belongs to the glypican family. As to expression, in the cartilage growth-plate, gradient of expression with highest levels from the proliferative and pre-hypertrophic zones to lowest, if any, in the hypertrophic zones (at protein level).

It localises to the cell membrane. Its subcellular location is the secreted. It is found in the extracellular space. Cell surface proteoglycan that bears heparan sulfate. Putative cell surface coreceptor for growth factors, extracellular matrix proteins, proteases and anti-proteases. Enhances migration and invasion of cancer cells through WNT5A signaling. This chain is Glypican-6 (Gpc6), found in Mus musculus (Mouse).